A 180-amino-acid polypeptide reads, in one-letter code: Cytochrome b6-f complex iron-sulfur subunit (180 aa).

A helical membrane pass occupies residues 21 to 43; the sequence is LLTFGTITGTALGALYPVVKYFI. The Rieske domain maps to 66-162; the sequence is VSEYLAKHLP…ATVTEDDKLV (97 aa). Residues Cys-108, His-110, Cys-126, and His-129 each coordinate [2Fe-2S] cluster. The cysteines at positions 113 and 128 are disulfide-linked.

This sequence belongs to the Rieske iron-sulfur protein family. In terms of assembly, the 4 large subunits of the cytochrome b6-f complex are cytochrome b6, subunit IV (17 kDa polypeptide, PetD), cytochrome f and the Rieske protein, while the 4 small subunits are PetG, PetL, PetM and PetN. The complex functions as a dimer. Requires [2Fe-2S] cluster as cofactor.

The protein localises to the cellular thylakoid membrane. It catalyses the reaction 2 oxidized [plastocyanin] + a plastoquinol + 2 H(+)(in) = 2 reduced [plastocyanin] + a plastoquinone + 4 H(+)(out). Functionally, component of the cytochrome b6-f complex, which mediates electron transfer between photosystem II (PSII) and photosystem I (PSI), cyclic electron flow around PSI, and state transitions. The chain is Cytochrome b6-f complex iron-sulfur subunit from Thermosynechococcus vestitus (strain NIES-2133 / IAM M-273 / BP-1).